Consider the following 560-residue polypeptide: uncharacterized protein (560 aa).

The region spanning 1–281 (MLWNWVALVG…LGSFFHVAMN (281 aa)) is the ABC transmembrane type-1 domain. 7 helical membrane-spanning segments follow: residues 2-22 (LWNWVALVGGIISAVVFSYIL), 32-52 (LLSAVILGIVLIAALALRAFA), 108-128 (IYFGRYLPQLFYSLLAPLTLF), 138-160 (TAIILLICVPLIPMSIIAVNKIA), 168-188 (WSIYVGLGSSFLDNLQGLITL), 223-243 (VSLMDLLAYGGAAIGILTALL), and 249-269 (QLSVLGVILFILLSSEFFIPL). The region spanning 314–547 (VEIKDLHFSY…QGAYAEMFQQ (234 aa)) is the ABC transporter domain. Residue 347–354 (GKSGCGKS) participates in ATP binding.

This sequence belongs to the ABC transporter superfamily.

The protein localises to the cell inner membrane. This is an uncharacterized protein from Haemophilus influenzae (strain ATCC 51907 / DSM 11121 / KW20 / Rd).